The primary structure comprises 165 residues: Regulator of ribonuclease activity A (165 aa).

This sequence belongs to the RraA family. As to quaternary structure, homotrimer. Binds to both RNA-binding sites in the C-terminal region of Rne and to RhlB.

Its subcellular location is the cytoplasm. In terms of biological role, globally modulates RNA abundance by binding to RNase E (Rne) and regulating its endonucleolytic activity. Can modulate Rne action in a substrate-dependent manner by altering the composition of the degradosome. Modulates RNA-binding and helicase activities of the degradosome. This is Regulator of ribonuclease activity A from Haemophilus ducreyi (strain 35000HP / ATCC 700724).